The following is a 148-amino-acid chain: MKYQKLENQESNWKWIYLIRKHREGENITRYEERSLQEAKAQELLESQNYPSQIEEWIKNHLSPALPIKLDQAIRARRKRFFNGEKQHTKKKSIDLEYAVWLRLSKYSRKMKMTLSETITYMIDERESKAQFENQMAAMKTSLKNLLK.

This sequence belongs to the MatP family. In terms of assembly, homodimer.

The protein resides in the cytoplasm. Required for spatial organization of the terminus region of the chromosome (Ter macrodomain) during the cell cycle. Prevents early segregation of duplicated Ter macrodomains during cell division. Binds specifically to matS, which is a 13 bp signature motif repeated within the Ter macrodomain. The sequence is that of Macrodomain Ter protein from Haemophilus influenzae (strain 86-028NP).